The following is an 866-amino-acid chain: Interleukin-17 receptor A (866 aa).

Residues 1–32 (MGAARSPPSAVPGPLLGLLLLLLGVLAPGGAS) form the signal peptide. The Extracellular portion of the chain corresponds to 33-320 (LRLLDHRALV…EPIPDYMPLW (288 aa)). A disulfide bridge connects residues Cys43 and Cys50. 3 N-linked (GlcNAc...) asparagine glycosylation sites follow: Asn49, Asn54, and Asn67. Intrachain disulfides connect Cys57–Cys126 and Cys185–Cys196. Residues Asn206, Asn225, Asn242, and Asn265 are each glycosylated (N-linked (GlcNAc...) asparagine). 3 disulfide bridges follow: Cys245/Cys276, Cys277/Cys303, and Cys290/Cys294. Residues 321–341 (VYWFITGISILLVGSVILLIV) form a helical membrane-spanning segment. Residues 342-866 (CMTWRLAGPG…MGSESEGPSA (525 aa)) lie on the Cytoplasmic side of the membrane. Residues 377 to 534 (PRKVWIIYSA…LMDRFEEVYF (158 aa)) enclose the SEFIR domain. Ser708 and Ser736 each carry phosphoserine. Disordered stretches follow at residues 717–736 (LFLP…PMAS) and 773–840 (MVLT…RSLQ). Residues 788–801 (QSVQSDQGYISRSS) show a composition bias toward polar residues. Residues 809–819 (TEMEEEEEEEQ) are compositionally biased toward acidic residues.

As to quaternary structure, forms heterodimers with IL17RC; the heterodimer binds IL17A and IL17F homodimers as well as the heterodimer formed by IL17A and IL17F. Forms complexes with 2:1 binding stoichiometry: two receptor chains for one interleukin molecule. IL17A homodimer preferentially drives the formation of IL17RA-IL17RC heterodimeric receptor complex, whereas IL17F homodimer forms predominantly complexes with IL17RC homodimer. IL17A homodimer adopts an asymmetrical ternary structure with one IL17RA molecule, allowing for high affinity interactions of one IL17A monomer with one IL17RA molecule (via D1 and D2 domains), while disfavoring binding of a second IL17RA molecule on the other IL17A monomer. IL17A-IL17F forms complexes with IL17RA-IL17RC, but with lower affinity when compared to IL17A homodimer. IL17RA chain cannot distinguish between IL17A and IL17F molecules, potentially enabling the formation of topologically distinct complexes. Interacts with TRAF3IP2. Forms heterodimers with IL17RE; the heterodimer binds IL17C. (Microbial infection) Interacts with SARS coronavirus-2/SARS-CoV-2 virus protein ORF8. Glycosylated. As to expression, widely expressed.

The protein localises to the cell membrane. The protein resides in the secreted. Receptor for IL17A and IL17F, major effector cytokines of innate and adaptive immune system involved in antimicrobial host defense and maintenance of tissue integrity. Receptor for IL17A. Receptor for IL17F. Binds to IL17A with higher affinity than to IL17F. Binds IL17A and IL17F homodimers as part of a heterodimeric complex with IL17RC. Also binds heterodimers formed by IL17A and IL17F as part of a heterodimeric complex with IL17RC. Cytokine binding triggers homotypic interaction of IL17RA and IL17RC chains with TRAF3IP2 adapter, leading to TRAF6-mediated activation of NF-kappa-B and MAPkinase pathways, ultimately resulting in transcriptional activation of cytokines, chemokines, antimicrobial peptides and matrix metalloproteinases, with potential strong immune inflammation. Involved in antimicrobial host defense primarily promoting neutrophil activation and recruitment at infection sites to destroy extracellular bacteria and fungi. In secondary lymphoid organs, contributes to germinal center formation by regulating the chemotactic response of B cells to CXCL12 and CXCL13, enhancing retention of B cells within the germinal centers, B cell somatic hypermutation rate and selection toward plasma cells. Plays a role in the maintenance of the integrity of epithelial barriers during homeostasis and pathogen infection. Stimulates the production of antimicrobial beta-defensins DEFB1, DEFB103A, and DEFB104A by mucosal epithelial cells, limiting the entry of microbes through the epithelial barriers. Involved in antiviral host defense through various mechanisms. Enhances immunity against West Nile virus by promoting T cell cytotoxicity. Contributes to Influenza virus clearance by driving the differentiation of B-1a B cells, providing for production of virus-specific IgM antibodies at first line of host defense. Receptor for IL17C as part of a heterodimeric complex with IL17RE. Its function is as follows. (Microbial infection) Receptor for SARS coronavirus-2/SARS-CoV-2 virus protein ORF8, leading to IL17 pathway activation and an increased secretion of pro-inflammatory factors through activating NF-kappa-B signaling pathway. This is Interleukin-17 receptor A from Homo sapiens (Human).